The sequence spans 489 residues: MDKKSGGTKAIEEATVPLLECHNAAEEGGGMKREIWIETKKIWYIVGPSIFTGLATYSILIITQAFAGHLGDLELAAISIINNFTLGFNYGLLLGMASALETLCGQAFGAREYYMLGVYMQRYWIILFLCCILLLPMYLFATPILKFIGQSDDIAELTGTIALWVIPVHFAFAFFFPLNRFLQCQLKNKVIAISAGVSLAVHILVCWFFVYGYKLGIIGTMASVNVPWWLNIFILFLYSTRGGCTLTWTGFSSEAFTGLLELTKLSASSGIMLCLENWYYKILMLMTGNLVNAKIAVDSLSICMSVNGWEMMIPLAFFAGTGVRVANELGAGNGKGARFATIVSITLSLMIGLFFTVIIVIFHDQIGSIFSSSEAVLNAVDNLSVLLAFTVLLNSVQPVLSGVAVGSGWQSYVAYINLGCYYLIGLPFGLTMGWIFKFGVKGIWAGMIFGGTAIQTLILIIITTRCDWDNEAHKSSVRIKKWLVSDAGN.

12 consecutive transmembrane segments (helical) span residues 42–62 (IWYIVGPSIFTGLATYSILII), 75–95 (LAAISIINNFTLGFNYGLLLG), 125–145 (IILFLCCILLLPMYLFATPIL), 157–177 (LTGTIALWVIPVHFAFAFFFP), 190–210 (VIAISAGVSLAVHILVCWFFV), 217–237 (IIGTMASVNVPWWLNIFILFL), 271–291 (IMLCLENWYYKILMLMTGNLV), 300–320 (LSICMSVNGWEMMIPLAFFAG), 342–362 (IVSITLSLMIGLFFTVIIVIF), 385–405 (VLLAFTVLLNSVQPVLSGVAV), 416–436 (INLGCYYLIGLPFGLTMGWIF), and 442–462 (GIWAGMIFGGTAIQTLILIII).

This sequence belongs to the multi antimicrobial extrusion (MATE) (TC 2.A.66.1) family.

Its subcellular location is the membrane. The protein is Protein DETOXIFICATION 26 of Arabidopsis thaliana (Mouse-ear cress).